The chain runs to 454 residues: Guanine deaminase (454 aa).

Zn(2+) is bound by residues His-82 and His-84. Residues 84-87, 213-214, 240-243, and Asp-330 each bind substrate; these read HAPQ, RF, and HISE. The Zn(2+) site is built by His-240 and Asp-330. Ser-453 bears the Phosphoserine mark.

The protein belongs to the metallo-dependent hydrolases superfamily. ATZ/TRZ family. As to quaternary structure, homodimer. Requires Zn(2+) as cofactor.

The enzyme catalyses guanine + H2O + H(+) = xanthine + NH4(+). It functions in the pathway purine metabolism; guanine degradation; xanthine from guanine: step 1/1. Its function is as follows. Catalyzes the hydrolytic deamination of guanine, producing xanthine and ammonia. The protein is Guanine deaminase (Gda) of Rattus norvegicus (Rat).